A 146-amino-acid chain; its full sequence is Hemoglobin A/D subunit beta (146 aa).

The Globin domain occupies 2 to 146 (HWTSEEKQYI…VAHALALGYH (145 aa)). The heme b site is built by His-63 and His-92.

Belongs to the globin family. Hemoglobins A and D are heterotetramers of alpha-1, alpha-2 and two identical beta chains. As to expression, red blood cells.

Its function is as follows. Involved in oxygen transport from the lung to the various peripheral tissues. The protein is Hemoglobin A/D subunit beta of Aldabrachelys gigantea (Aldabra giant tortoise).